Here is a 1277-residue protein sequence, read N- to C-terminus: MSARGPAFGLLLLLLCPVQVFSQSCVWYGECGIASGDKRYNCRYSGPPKPLPEDGYDLVQELCPGFFFGNVSLCCDVQQLRTLKDNLQLPLQFLSRCPSCFYNLMNLFCELTCSPRQSQFLNVTATEDYVDPVTNQTKTNVKELEYYVGETFANAMYNACRDVEAPSSNEKALGLLCGREAQACNATNWIEYMFNKDNGQAPFTITPIFSDLPTHGMEPMNNATKGCDESVDEVTGPCSCQDCSIVCGPKPQPPPPPVPWRILGLDAMYVIMWSSYMAFLIVFFGAFFAVWCYRKRYFVSEYTPIDGNIAFSVNSSDKGQAFCCDPLGAAFERGLRRLFAQWGAFCVRHPGCVVFFSLAFIVACSSGLVFIRVTTDPVDLWSAPGSQARREKEYFDTHFGPFFRMEQLIIRATNNQSHIYHPYPAGADVPFGPPLSRDILHQVLDLQTAIENITASYNNETVTLQDICLAPLSPYNKNCTILSVLNYFQNSHSVLDHQVGDFFFVYADYHTHFLYCVRAPASLNDASLLHDPCLGTFGGPVFPWLVLGGYDDQNYNNATALVITFPVNNYYNDTEKLQRAQAWESEFINFVKNYKNPNLTISFMAERSIEDELNRESNSDLFTILISYAIMFLYISIALGHIKSCSRLLVDSKISLGIAGILIVLSSVACSLGIFSYIGVPLTLIVIEVIPFLVLAVGVDNIFILVQTYQRDERLQGETLDQQLGRVLGEVAPSMFLSSFSETVAFFLGGLSVVPAVHTFSLFAGMAVLIDFLLQITCFVSLLGLDIKRQEKNRLDVVCCVQGAEDGAGVQASESCLFRFFKNSYAPLLLKDWMRPIVIAVFVGVLSFSIAVLNKVEIGLDQSLSMPDDSYVMDYFQSLSRYLHAGPPVYFVVEEGHNYTSLKGQNMVCGGLGCNNDSLVQQIFTAAQLDNYTRIGFAPSSWIDDYFDWIKPQSSCCRVYNSTDQFCNASVVDPTCIRCRPLTSEGKQRPQGEDFMRFLPMFLSDNPNPKCGKGGHAAYSSAVNILGNGSGVGATYFMTYHTVLQASADFIDAMQKARLIASNITRTMGLEASSYRVFPYSVFYVFYEQYLTVIDDTIFNLGVSLGAIFLVTVVLMGCELWATVIMCVTIAMILVNMFGVMWLWGISLNAVSLVNLVMSCGISVEFCSHITRAFTLSTKGSRVDRAEEALAHMGSSVFSGITLTKFGGIVVLAFAKSQIFQIFYFRMYLAIVLLGATHGLIFLPVLLSYIGPSINKAKSLATQERYKGTEREQLLNF.

A signal peptide spans 1–22 (MSARGPAFGLLLLLLCPVQVFS). Residues 23-269 (QSCVWYGECG…WRILGLDAMY (247 aa)) are Lumenal-facing. 9 cysteine pairs are disulfide-bonded: cysteine 25–cysteine 74, cysteine 31–cysteine 42, cysteine 63–cysteine 109, cysteine 75–cysteine 113, cysteine 97–cysteine 238, cysteine 100–cysteine 160, cysteine 177–cysteine 184, cysteine 227–cysteine 243, and cysteine 240–cysteine 247. Asparagine 41 contacts cholesterol. N-linked (GlcNAc...) asparagine glycosylation is present at asparagine 70. Glutamine 79 is a binding site for cholesterol. N-linked (GlcNAc...) asparagine glycans are attached at residues asparagine 122 and asparagine 135. The interval 175-205 (LLCGREAQACNATNWIEYMFNKDNGQAPFTI) is important for cholesterol binding and cholesterol transfer from NPC1 to liposomes. N-linked (GlcNAc...) asparagine glycans are attached at residues asparagine 185 and asparagine 222. The helical transmembrane segment at 270–290 (VIMWSSYMAFLIVFFGAFFAV) threads the bilayer. The Cytoplasmic portion of the chain corresponds to 291 to 350 (WCYRKRYFVSEYTPIDGNIAFSVNSSDKGQAFCCDPLGAAFERGLRRLFAQWGAFCVRHP). A helical transmembrane segment spans residues 351 to 371 (GCVVFFSLAFIVACSSGLVFI). The Lumenal portion of the chain corresponds to 372 to 621 (RVTTDPVDLW…ELNRESNSDL (250 aa)). 4 N-linked (GlcNAc...) asparagine glycosylation sites follow: asparagine 415, asparagine 452, asparagine 459, and asparagine 478. Cystine bridges form between cysteine 468–cysteine 479 and cysteine 516–cysteine 533. The region spanning 620-785 (DLFTILISYA…ITCFVSLLGL (166 aa)) is the SSD domain. A helical transmembrane segment spans residues 622-642 (FTILISYAIMFLYISIALGHI). The Cytoplasmic portion of the chain corresponds to 643–653 (KSCSRLLVDSK). A helical transmembrane segment spans residues 654-674 (ISLGIAGILIVLSSVACSLGI). Residues 675–677 (FSY) are Lumenal-facing. The helical transmembrane segment at 678–698 (IGVPLTLIVIEVIPFLVLAVG) threads the bilayer. At 699–734 (VDNIFILVQTYQRDERLQGETLDQQLGRVLGEVAPS) the chain is on the cytoplasmic side. The chain crosses the membrane as a helical span at residues 735–755 (MFLSSFSETVAFFLGGLSVVP). Residues 756–759 (AVHT) are Lumenal-facing. The chain crosses the membrane as a helical span at residues 760 to 780 (FSLFAGMAVLIDFLLQITCFV). The Cytoplasmic portion of the chain corresponds to 781–832 (SLLGLDIKRQEKNRLDVVCCVQGAEDGAGVQASESCLFRFFKNSYAPLLLKD). Residues 833–853 (WMRPIVIAVFVGVLSFSIAVL) traverse the membrane as a helical segment. The Lumenal segment spans residues 854–1097 (NKVEIGLDQS…EQYLTVIDDT (244 aa)). N-linked (GlcNAc...) asparagine glycosylation is present at asparagine 898. Residues cysteine 909 and cysteine 914 are joined by a disulfide bond. Residues asparagine 916, asparagine 931, asparagine 961, asparagine 968, asparagine 1028, and asparagine 1063 are each glycosylated (N-linked (GlcNAc...) asparagine). 3 cysteine pairs are disulfide-bonded: cysteine 956–cysteine 1011, cysteine 957–cysteine 979, and cysteine 967–cysteine 976. A helical membrane pass occupies residues 1098–1118 (IFNLGVSLGAIFLVTVVLMGC). Over 1119 to 1123 (ELWAT) the chain is Cytoplasmic. Residues 1124 to 1144 (VIMCVTIAMILVNMFGVMWLW) traverse the membrane as a helical segment. A topological domain (lumenal) is located at residue glycine 1145. Residues 1146 to 1166 (ISLNAVSLVNLVMSCGISVEF) form a helical membrane-spanning segment. At 1167 to 1194 (CSHITRAFTLSTKGSRVDRAEEALAHMG) the chain is on the cytoplasmic side. Residues 1195-1215 (SSVFSGITLTKFGGIVVLAFA) form a helical membrane-spanning segment. At 1216–1226 (KSQIFQIFYFR) the chain is on the lumenal side. The chain crosses the membrane as a helical span at residues 1227–1247 (MYLAIVLLGATHGLIFLPVLL). Residues 1248 to 1277 (SYIGPSINKAKSLATQERYKGTEREQLLNF) lie on the Cytoplasmic side of the membrane. The segment at 1274 to 1277 (LLNF) is required for location in lysosomes. Residues 1274 to 1277 (LLNF) carry the Di-leucine motif motif.

This sequence belongs to the patched family. As to quaternary structure, interacts (via the second lumenal domain) with NPC2. Interacts with TMEM97; the interaction may decrease NPC1 availability to the cell. Interacts with TIM1. Interacts with SLC38A9; this interaction inhibits cholesterol-mediated mTORC1 activation via its sterol transport activity. In terms of processing, N-glycosylated. In terms of tissue distribution, detected in corpus luteum, granulosa cells and adrenal gland.

The protein resides in the late endosome membrane. The protein localises to the lysosome membrane. It carries out the reaction cholesterol(in) = cholesterol(out). Functionally, intracellular cholesterol transporter which acts in concert with NPC2 and plays an important role in the egress of cholesterol from the endosomal/lysosomal compartment. Unesterified cholesterol that has been released from LDLs in the lumen of the late endosomes/lysosomes is transferred by NPC2 to the cholesterol-binding pocket in the N-terminal domain of NPC1. Cholesterol binds to NPC1 with the hydroxyl group buried in the binding pocket. Binds oxysterol with higher affinity than cholesterol. May play a role in vesicular trafficking in glia, a process that may be crucial for maintaining the structural and functional integrity of nerve terminals. Inhibits cholesterol-mediated mTORC1 activation throught its interaction with SLC38A9. The sequence is that of NPC intracellular cholesterol transporter 1 from Sus scrofa (Pig).